A 256-amino-acid chain; its full sequence is Follistatin-related protein 3 (256 aa).

The signal sequence occupies residues 1–23; sequence MRSGALWPLLWGALVWTVGSVGA. The TB domain occupies 34-105; the sequence is GVCWLQQGRE…SCDGVECGPG (72 aa). Cystine bridges form between C36–C59, C46–C90, C60–C93, C97–C108, C102–C117, C119–C151, C123–C144, and C133–C165. Residue N71 is glycosylated (N-linked (GlcNAc...) asparagine). Positions 97–117 constitute a Follistatin-like 1 domain; sequence CDGVECGPGKACRMLGGRPHC. 2 consecutive Kazal-like domains span residues 111–167 and 187–243; these read LGGR…RCQK and SAHC…ICTG. The 24-residue stretch at 168-191 folds into the Follistatin-like 2 domain; sequence SCAQVVCPRPQSCLVDQTGSAHCV. 3 disulfides stabilise this stretch: C193–C227, C198–C220, and C209–C241. The N-linked (GlcNAc...) asparagine glycan is linked to N213.

As to quaternary structure, interacts with INHBA and INHBB. Interacts with FN1. Interacts with ADAM12. Interacts with MLLT10; the interaction enhances MLLT10 in vitro transcriptional activity and self-association. Interacts with MSTN. Abundantly expressed in heart, lung, kidney and testis. Continuously expressed in embryonic heart.

It localises to the secreted. Its subcellular location is the nucleus. Functionally, the secreted form is a binding and antagonizing protein for members of the TGF-beta family, such as activin, BMP2 and MSTN. Inhibits activin A-, activin B-, BMP2- and MSDT-induced cellular signaling; more effective on activin A than on activin B. Involved in bone formation; inhibits osteoclast differentiation. Involved in hematopoiesis; involved in differentiation of hemopoietic progenitor cells, increases hematopoietic cell adhesion to fibronectin and seems to contribute to the adhesion of hematopoietic precursor cells to the bone marrow stroma. The nuclear form is probably involved in transcriptional regulation via interaction with MLLT10. The protein is Follistatin-related protein 3 (Fstl3) of Mus musculus (Mouse).